The chain runs to 708 residues: Kelch-like protein 11 (708 aa).

The signal sequence occupies residues 1 to 15 (MAAAAVAAAAAAAAA). Positions 47–70 (DFGPGPGISAMEASGGDPGPEAED) are disordered. The 77-residue stretch at 94-170 (CDITLCFGGA…MYTGRIRVST (77 aa)) folds into the BTB domain. Residues 205-307 (CVAIHSLAHM…KPTYLTRHVK (103 aa)) enclose the BACK domain. Kelch repeat units lie at residues 360 to 407 (VIMV…VTES), 408 to 453 (YVYV…EVKG), 455 to 501 (LYSI…AIED), 503 to 556 (FVYI…VVNS), and 610 to 661 (DVFI…HVRI). At serine 465 the chain carries Phosphoserine.

As to quaternary structure, component of a cullin-RING-based BCR (BTB-CUL3-RBX1) E3 ubiquitin-protein ligase complex. Homodimer. Interacts with CUL3.

Component of a cullin-RING-based BCR (BTB-CUL3-RBX1) E3 ubiquitin-protein ligase complex that mediates the ubiquitination of target proteins, leading most often to their proteasomal degradation. The sequence is that of Kelch-like protein 11 (KLHL11) from Homo sapiens (Human).